Consider the following 345-residue polypeptide: Probable aldo-keto reductase 4 (345 aa).

Tyrosine 63 (proton donor) is an active-site residue. Histidine 130 serves as a coordination point for substrate. Position 209-219 (209-219 (SPLGRGFFASG)) interacts with NADP(+).

The protein belongs to the aldo/keto reductase family.

This chain is Probable aldo-keto reductase 4, found in Arabidopsis thaliana (Mouse-ear cress).